A 417-amino-acid polypeptide reads, in one-letter code: NADH-quinone oxidoreductase subunit F (417 aa).

Residue 54-63 (GRGGAGFSTG) participates in NAD(+) binding. 166 to 213 (GAGAYICGEETALLESLEGKKGMPRLKPPFPAGFGLYGCPTTINNVES) is a binding site for FMN. [4Fe-4S] cluster is bound by residues Cys-345, Cys-348, Cys-351, and Cys-391.

It belongs to the complex I 51 kDa subunit family. Requires FMN as cofactor. [4Fe-4S] cluster serves as cofactor.

The enzyme catalyses a quinone + NADH + 5 H(+)(in) = a quinol + NAD(+) + 4 H(+)(out). In terms of biological role, NDH-1 shuttles electrons from NADH, via FMN and iron-sulfur (Fe-S) centers, to quinones in the respiratory chain. Couples the redox reaction to proton translocation (for every two electrons transferred, four hydrogen ions are translocated across the cytoplasmic membrane), and thus conserves the redox energy in a proton gradient. This Rickettsia bellii (strain OSU 85-389) protein is NADH-quinone oxidoreductase subunit F (nuoF).